The sequence spans 233 residues: UPF0758 protein RoseRS_0767 (233 aa).

The MPN domain maps to leucine 107–glycine 229. 3 residues coordinate Zn(2+): histidine 178, histidine 180, and aspartate 191. Positions histidine 178–aspartate 191 match the JAMM motif motif.

The protein belongs to the UPF0758 family.

This chain is UPF0758 protein RoseRS_0767, found in Roseiflexus sp. (strain RS-1).